Reading from the N-terminus, the 513-residue chain is MDPSSAGSGGNSLPSVGPDGQKRRVCYFYDPDVGNYYYGQGHPMKPHRIRMTHSLLARYGLLNQMQVYRPNPARERELCRFHAEEYINFLRSVTPETQQDQIRLLKRFNVGEECPVLDGLYSFCQTYAGASVGGAVKFNHGHDIAINWSGGLHHAKKCEASGFCYVNDIVLAILELLKHHERVLYVDIDIHHGDGVEEAFYTTDRVMTVSFHKFGDYFPGTGDIRDIGHSKGKYYSLNVPLDDGIDDESYQSLFKPIMGKVMEVFRPGAVVLQCGADSLSGDRLGCFNLSIKGHAECVRYMRSFNVPLLLLGGGGYTIRNVARCWCYETGVALGQEPEDKMPVNEYYEYFGPDYTLHVAPSNMENKNTRQQLDDIRSKLSKLRHAPSVHFQERVPDTEIPEQDEDQDDPDERHDPDSDMEVDDHKAVEESSRRSILGIKIKREFGENATRVQDGGRVASEHRGLEPMAEDIGSSKQAPQADASAMAIDEPSNVKNEPESSTKLQGQAAAYHKP.

Residues 23–334 form a histone deacetylase region; sequence RRVCYFYDPD…WCYETGVALG (312 aa). The active-site Proton donor/acceptor is histidine 154. Aspartate 189, histidine 191, and aspartate 277 together coordinate Zn(2+). Disordered regions lie at residues 384–432 and 446–513; these read HAPS…ESSR and ENAT…YHKP. Over residues 398–409 the composition is skewed to acidic residues; sequence EIPEQDEDQDDP. A compositionally biased stretch (basic and acidic residues) spans 410 to 432; that stretch reads DERHDPDSDMEVDDHKAVEESSR. The segment covering 492 to 504 has biased composition (polar residues); it reads NVKNEPESSTKLQ.

The protein belongs to the histone deacetylase family. HD type 1 subfamily. It depends on Zn(2+) as a cofactor.

It is found in the nucleus. It carries out the reaction N(6)-acetyl-L-lysyl-[histone] + H2O = L-lysyl-[histone] + acetate. Functionally, responsible for the deacetylation of lysine residues on the N-terminal part of the core histones (H2A, H2B, H3 and H4). Histone deacetylation gives a tag for epigenetic repression and plays an important role in transcriptional regulation, cell cycle progression and developmental events. Histone deacetylases act via the formation of large multiprotein complexes. In Zea mays (Maize), this protein is Probable histone deacetylase 19.